We begin with the raw amino-acid sequence, 187 residues long: UPF0301 protein Sala_0165 (187 aa).

The protein belongs to the UPF0301 (AlgH) family.

In Sphingopyxis alaskensis (strain DSM 13593 / LMG 18877 / RB2256) (Sphingomonas alaskensis), this protein is UPF0301 protein Sala_0165.